Here is a 572-residue protein sequence, read N- to C-terminus: Protein 5NUC (572 aa).

A signal peptide spans 1–25 (MLFFLNFFVLVFSIELALLTASAAA). 2 residues coordinate Zn(2+): Asp-39 and His-41. A disulfide bridge connects residues Cys-54 and Cys-64. Residue Asn-82 is glycosylated (N-linked (GlcNAc...) asparagine). Zn(2+)-binding residues include Asp-93, Asn-125, His-227, and His-250. The cysteines at positions 360 and 365 are disulfide-linked. Substrate contacts are provided by Arg-361, Gln-399, Arg-404, and Phe-427. Residues Asn-454 and Asn-490 are each glycosylated (N-linked (GlcNAc...) asparagine). Cys-488 and Cys-491 are oxidised to a cystine. A substrate-binding site is contributed by 512–518 (FMKDGGD).

Belongs to the 5'-nucleotidase family. Requires Zn(2+) as cofactor.

The enzyme catalyses UDP-sugar + H2O = UMP + alpha-D-aldose 1-phosphate.. The catalysed reaction is a ribonucleoside 5'-phosphate + H2O = a ribonucleoside + phosphate. Functionally, degradation of external UDP-glucose to uridine monophosphate and glucose-1-phosphate, which can then be used by the cell. The sequence is that of Protein 5NUC (5NUC) from Lutzomyia longipalpis (Sand fly).